A 285-amino-acid polypeptide reads, in one-letter code: Probable endonuclease 4 (285 aa).

Positions 69, 109, 145, 179, 182, 216, 229, 231, and 261 each coordinate Zn(2+).

It belongs to the AP endonuclease 2 family. Zn(2+) is required as a cofactor.

The enzyme catalyses Endonucleolytic cleavage to 5'-phosphooligonucleotide end-products.. Endonuclease IV plays a role in DNA repair. It cleaves phosphodiester bonds at apurinic or apyrimidinic (AP) sites, generating a 3'-hydroxyl group and a 5'-terminal sugar phosphate. This Shigella boydii serotype 4 (strain Sb227) protein is Probable endonuclease 4.